A 459-amino-acid polypeptide reads, in one-letter code: Sulfite oxidase (459 aa).

The region spanning 4–83 (YPRYTREEVG…LQQYKVGELS (80 aa)) is the Cytochrome b5 heme-binding domain. Residues His-40, His-65, and His-69 each coordinate heme b. The tract at residues 83-115 (SPDEAPAAPDAQDPFAGDPPRHPGLRVNSQKPF) is disordered. Residues 85 to 100 (DEAPAAPDAQDPFAGD) are compositionally biased toward low complexity. The hinge stretch occupies residues 86–95 (EAPAAPDAQD). Residues 96 to 323 (PFAGDPPRHP…PSRWQQNDYK (228 aa)) form a moco domain region. Residues 136–140 (FTRNH), Cys-185, Asp-244, His-283, Arg-288, and 299–301 (SVK) each bind Mo-molybdopterin. A homodimerization region spans residues 324 to 459 (GFSPCVDWDT…RGVLSTAWHR (136 aa)).

In terms of assembly, homodimer. Requires heme b as cofactor. The cofactor is Mo-molybdopterin.

It is found in the mitochondrion intermembrane space. It carries out the reaction sulfite + O2 + H2O = sulfate + H2O2. Its pathway is energy metabolism; sulfur metabolism. Its function is as follows. Catalyzes the oxidation of sulfite to sulfate, the terminal reaction in the oxidative degradation of sulfur-containing amino acids. The protein is Sulfite oxidase (SUOX) of Gallus gallus (Chicken).